A 471-amino-acid polypeptide reads, in one-letter code: BPI fold-containing family B member 1 (471 aa).

A signal peptide spans 1 to 18 (MTNPWIVSLLLGATLVQA). Residues Asn150, Asn157, Asn260, and Asn397 are each glycosylated (N-linked (GlcNAc...) asparagine). Cys154 and Cys197 form a disulfide bridge.

It belongs to the BPI/LBP/Plunc superfamily. Plunc family.

It is found in the secreted. Functionally, may play a role in innate immunity in mouth, nose and lungs. Binds bacterial lipopolysaccharide (LPS) and modulates the cellular responses to LPS. The chain is BPI fold-containing family B member 1 (Bpifb1) from Rattus norvegicus (Rat).